Reading from the N-terminus, the 274-residue chain is uncharacterized protein (274 aa).

104 to 111 (GVFAIGKS) serves as a coordination point for ATP.

This is an uncharacterized protein from Mycoplasma genitalium (strain ATCC 33530 / DSM 19775 / NCTC 10195 / G37) (Mycoplasmoides genitalium).